We begin with the raw amino-acid sequence, 97 residues long: Secreted LysM effector Mg1LysM (97 aa).

Residues 1–18 (MQFTALVAALLSVAAVQA) form the signal peptide. The region spanning 37–84 (QQYVARSGDTLTKIAQEIYHDVVGVCDIARANNLADPNRIDAGTPYTI) is the LysM domain. Residues glycine 44, threonine 48, asparagine 74, and isoleucine 76 each contribute to the chitin site.

It belongs to the secreted LysM effector family. In terms of assembly, forms homodimers in a chitin-independent manner through interactions at the N-termini of Mg1LysM monomers. Homodimers are further polymerized in a chitin-dependent manner.

It is found in the secreted. Its subcellular location is the cell wall. Secreted effector that enables the plant pathogenic fungus to manipulate host defenses for successful infection. Binds chitin but not cellulose or xylan. Chitin-induced polymerization of homodimers forms a contiguous Mg1LysM highly oligomeric super-complexe that is anchored to the chitin in the fungal cell wall to prevent hydrolysis by host chitinases. The polypeptide is Secreted LysM effector Mg1LysM (Zymoseptoria tritici (strain ST99CH_3D7)).